The following is a 513-amino-acid chain: Arabinoxylan arabinofuranohydrolase (513 aa).

The N-terminal stretch at 1–26 (MRKKCSVCLWILVLLLSCLSGKSAYA) is a signal peptide. The active-site Proton acceptor is the aspartate 50. The active-site Proton donor is glutamate 251. Asparagine 314 is a binding site for substrate. Positions 382-511 (NRVEAETFAW…LFNFDYWQFT (130 aa)) constitute a CBM6 domain. Residues glutamate 385, glutamate 387, asparagine 409, glutamine 410, and aspartate 506 each contribute to the Ca(2+) site.

The protein resides in the secreted. The catalysed reaction is Hydrolysis of terminal non-reducing alpha-L-arabinofuranoside residues in alpha-L-arabinosides.. It participates in glycan degradation; xylan degradation. In terms of biological role, cleaves arabinose units from O-2- or O-3-monosubstituted xylose residues, thereby assisting in arabinoxylan (AX) and short-chain arabinoxylo-oligosaccharide (AXOS) degradation. Is more active on wheat bran AXOS than on wheat water-extractable AX and rye water-extractable AX. Does not display endoxylanase, xylosidase or arabinanase activity. In Bacillus subtilis (strain 168), this protein is Arabinoxylan arabinofuranohydrolase (xynD).